Here is a 141-residue protein sequence, read N- to C-terminus: Arsenate reductase (141 aa).

The active-site Nucleophile; cysteine thioarsenate intermediate is the cysteine 12.

This sequence belongs to the ArsC family. In terms of assembly, monomer in solution.

It catalyses the reaction [glutaredoxin]-dithiol + arsenate + glutathione + H(+) = glutathionyl-S-S-[glutaredoxin] + arsenite + H2O. Its activity is regulated as follows. Inhibited by the thiol reagents iodoacetate (IAA) and N-ethylmaleimide (NEM). Activity is rapidly inactivated by the histidine-modifying reagent diethylpyrocarbonate (DEPC). In terms of biological role, involved in resistance to arsenate. Catalyzes the reduction of arsenate [As(V)] to arsenite [As(III)]. The resulting arsenite is then extruded from the cell via the ArsAB transport system. In Escherichia coli, this protein is Arsenate reductase.